Here is a 252-residue protein sequence, read N- to C-terminus: MPEENRGGHQPYTEESSVSALHPVRTDDSVGSSAEQTGDAPTLTERQRSVLNVIHRYVRERGYPPSIREIGEAVGLSSPSSVAHQLKVLQRKGYLHRDQNRPRAVEIRIPHKTSGRTRRELGGLSGSEEIVDIPLLGRIAAGGPILAEEHVEDVLSLPRQLVGEGTLFMLTVVGDSMIDAAIADGDLVVVRQQPDANNGDIVAALLGDEATVKVFKRDREHVWLLPRNSAYDPINGDSATILGKVVTVLRKV.

The interval Met1–Arg46 is disordered. The H-T-H motif DNA-binding region spans Ile67–Lys87. Residues Ser176 and Lys213 each act as for autocatalytic cleavage activity in the active site.

It belongs to the peptidase S24 family. As to quaternary structure, homodimer.

The catalysed reaction is Hydrolysis of Ala-|-Gly bond in repressor LexA.. Functionally, represses a number of genes involved in the response to DNA damage (SOS response), including recA and lexA. In the presence of single-stranded DNA, RecA interacts with LexA causing an autocatalytic cleavage which disrupts the DNA-binding part of LexA, leading to derepression of the SOS regulon and eventually DNA repair. The sequence is that of LexA repressor from Thermobifida fusca (strain YX).